The sequence spans 431 residues: Polyprenol-phosphate-mannose-dependent alpha-(1-2)-phosphatidylinositol pentamannoside mannosyltransferase (431 aa).

Transmembrane regions (helical) follow at residues 43 to 63, 108 to 128, 148 to 168, 175 to 195, 202 to 222, 229 to 249, 290 to 310, 332 to 352, 364 to 384, and 397 to 417; these read AAVL…YLAP, FAAV…ALLW, GGTA…AIWI, FDYG…VYTP, LLVG…VYLV, AAAF…LVVG, GFGP…ILAW, LSPI…IWLI, ILGW…LSFA, and LAWA…WIAA.

Belongs to the glycosyltransferase 87 family.

Its subcellular location is the cell membrane. Its pathway is phospholipid metabolism; phosphatidylinositol metabolism. Catalyzes the alpha-1,2 addition of a mannose residue from polyprenol-phosphate-mannose (PPM) to a monoacyl phosphatidylinositol tetramannoside (AcPIM4) to generate a monoacyl phosphatidylinositol pentamannoside (AcPIM5). The polypeptide is Polyprenol-phosphate-mannose-dependent alpha-(1-2)-phosphatidylinositol pentamannoside mannosyltransferase (pimE) (Mycobacterium tuberculosis (strain CDC 1551 / Oshkosh)).